The following is a 201-amino-acid chain: MSHDANTIDQRSHEGNLNKLGFWVFLTAEFSLFGTLFATLLTLQHGGDYAGKMTTELFELPLVLIMTFALLISSYTCGIAIYYMRKEKEKLMLIWMIITVLLGMVFVGFEIYEFAHYVHEGVNLTIGSYWSSFFILLGTHGAHVSLGIVWIICLLIQVAMRGLNKDNAPKLFIVSLYWHFLDVVWIFIFTAVYMIGMVFSG.

5 consecutive transmembrane segments (helical) span residues 20–40 (LGFW…FATL), 62–82 (LVLI…IAIY), 91–111 (LMLI…GFEI), 133–153 (FFIL…WIIC), and 180–200 (FLDV…MVFS).

The protein belongs to the cytochrome c oxidase subunit 3 family.

It is found in the cell membrane. The enzyme catalyses 2 a quinol + O2 = 2 a quinone + 2 H2O. Catalyzes quinol oxidation with the concomitant reduction of oxygen to water. The chain is Probable quinol oxidase subunit 3 (qoxC) from Staphylococcus saprophyticus subsp. saprophyticus (strain ATCC 15305 / DSM 20229 / NCIMB 8711 / NCTC 7292 / S-41).